The chain runs to 870 residues: Valine--tRNA ligase (870 aa).

The 'HIGH' region motif lies at 42-52; sequence PNVTGVLHIGH. The 'KMSKS' region signature appears at 527–531; the sequence is KMSKS. Lys530 is an ATP binding site. A coiled-coil region spans residues 800-870; the sequence is LENVDLSGIL…ISVELQNLRG (71 aa).

This sequence belongs to the class-I aminoacyl-tRNA synthetase family. ValS type 1 subfamily. Monomer.

It localises to the cytoplasm. The catalysed reaction is tRNA(Val) + L-valine + ATP = L-valyl-tRNA(Val) + AMP + diphosphate. Catalyzes the attachment of valine to tRNA(Val). As ValRS can inadvertently accommodate and process structurally similar amino acids such as threonine, to avoid such errors, it has a 'posttransfer' editing activity that hydrolyzes mischarged Thr-tRNA(Val) in a tRNA-dependent manner. The polypeptide is Valine--tRNA ligase (Campylobacter jejuni (strain RM1221)).